A 371-amino-acid chain; its full sequence is Alanine dehydrogenase (371 aa).

Arginine 15 and lysine 74 together coordinate substrate. Catalysis depends on histidine 95, which acts as the Proton donor/acceptor. NAD(+) is bound by residues serine 133, 177-178 (QA), aspartate 197, serine 219, 238-239 (VL), 266-269 (IAID), arginine 279, and 298-301 (VANM). Catalysis depends on aspartate 269, which acts as the Proton donor/acceptor.

The protein belongs to the AlaDH/PNT family. Homohexamer. Trimer of dimer.

The enzyme catalyses L-alanine + NAD(+) + H2O = pyruvate + NH4(+) + NADH + H(+). Its pathway is amino-acid degradation; L-alanine degradation via dehydrogenase pathway; NH(3) and pyruvate from L-alanine: step 1/1. Functionally, catalyzes the reversible reductive amination of pyruvate to L-alanine. May play a role in cell wall synthesis as L-alanine is an important constituent of the peptidoglycan layer. The sequence is that of Alanine dehydrogenase (ald) from Staphylococcus saprophyticus subsp. saprophyticus (strain ATCC 15305 / DSM 20229 / NCIMB 8711 / NCTC 7292 / S-41).